The chain runs to 261 residues: MLLALDAGNSNITIGAFEGSDLVCQWRLRTVHDQTADEWGILLRNLFSPAGLDIRRVDGIIISSVVPPIDSTLAFMTQRYFHTNAMFVGPHTDIGLEIRYDNPNEVGADRLVNGVAGFYKYGGPCVVVDMGTTINFDCISAAGEYLGGSIAVGIGISINALFSKTARLPKVDFRRPKNVIGTNTVASIQSGLYYGAIGMIDGILERVISQLGPETKAIATGGQAHMIVEGSRYLKTYDEHLTLQGLQMIWERNHPEAPQSE.

Aspartate 6–threonine 13 serves as a coordination point for ATP. Residues tyrosine 100 and glycine 107–arginine 110 contribute to the substrate site. The Proton acceptor role is filled by aspartate 109. A K(+)-binding site is contributed by aspartate 129. Threonine 132 lines the ATP pocket. A substrate-binding site is contributed by threonine 184.

Belongs to the type III pantothenate kinase family. Homodimer. The cofactor is NH4(+). K(+) serves as cofactor.

The protein resides in the cytoplasm. It catalyses the reaction (R)-pantothenate + ATP = (R)-4'-phosphopantothenate + ADP + H(+). It functions in the pathway cofactor biosynthesis; coenzyme A biosynthesis; CoA from (R)-pantothenate: step 1/5. Functionally, catalyzes the phosphorylation of pantothenate (Pan), the first step in CoA biosynthesis. The sequence is that of Type III pantothenate kinase from Solibacter usitatus (strain Ellin6076).